Reading from the N-terminus, the 81-residue chain is Putative membrane protein insertion efficiency factor (81 aa).

This sequence belongs to the UPF0161 family.

Its subcellular location is the cell inner membrane. Its function is as follows. Could be involved in insertion of integral membrane proteins into the membrane. The sequence is that of Putative membrane protein insertion efficiency factor from Legionella pneumophila (strain Lens).